We begin with the raw amino-acid sequence, 378 residues long: MALSTTPSQMSVALPTRIDGSSRSMIKVQSISFTDKSWGPPLLRLDSKSRSLGVKKRSTICMSLQQSSKSKVLVTPLELEDPKETPLNLFRPKEPYTATIVSVERIVGPQAPGETCHIVIDHDGNVPYWEGQSYGVIPPGENPKKPGAPHNVRLYSIASTRYGDSFDGKTASLCVRRAIYYDPETGKEDPSKAGVCSNFLCNAKPGDKVKITGPSGKVMLLPEDDPKATHIMIATGTGVAPYRGYLRRMFMENVPNFKFDGLAWLFLGVANSDSLLYDEEFAGYRKDYPENFRYDKALSREEKNKKGGKMYVQDKIEEYSDEIFKLLDNGAHIYFCGLKGMMPGIQDTLKRVAEERGESWEQKLTQLRKNKQWHVEVY.

Residues M1–Q65 constitute a chloroplast transit peptide. The FAD-binding FR-type domain occupies K93–L221. C196 and C201 are oxidised to a cystine. S197 is modified (phosphoserine). A Phosphothreonine modification is found at T229. NADP(+) is bound at residue I231–M249. Residues L349–W373 adopt a coiled-coil conformation.

The protein belongs to the ferredoxin--NADP reductase type 1 family. It depends on FAD as a cofactor. As to expression, expressed in shoots and roots. Less abundant in roots than RFNR2.

It localises to the plastid. The protein resides in the chloroplast. It catalyses the reaction 2 reduced [2Fe-2S]-[ferredoxin] + NADP(+) + H(+) = 2 oxidized [2Fe-2S]-[ferredoxin] + NADPH. Maintains the supply of reduced ferredoxin under non-photosynthetic conditions. The protein is Ferredoxin--NADP reductase, root isozyme 1, chloroplastic (RFNR1) of Arabidopsis thaliana (Mouse-ear cress).